The primary structure comprises 140 residues: Histone H2B.1, sperm (140 aa).

The tract at residues 1 to 47 (MPSQRSPTKRSPTKRSPQKGAGKGGKGSKRGGKARRRGGAAVRRRRR) is disordered. Short sequence motifs (SPKK motif) lie at residues 6-9 (SPTK), 11-14 (SPTK), and 16-19 (SPQK). 2 stretches are compositionally biased toward basic residues: residues 7-17 (PTKRSPTKRSP) and 26-47 (KGSK…RRRR). Residues serine 11 and serine 16 each carry the phosphoserine modification. The O-linked (GlcNAc) serine glycan is linked to serine 127. A Glycyl lysine isopeptide (Lys-Gly) (interchain with G-Cter in ubiquitin) cross-link involves residue lysine 135.

The protein belongs to the histone H2B family. The nucleosome is a histone octamer containing two molecules each of H2A, H2B, H3 and H4 assembled in one H3-H4 heterotetramer and two H2A-H2B heterodimers. The octamer wraps approximately 147 bp of DNA. Monoubiquitination of Lys-135 gives a specific tag for epigenetic transcriptional activation and is also prerequisite for histone H3 'Lys-4' and 'Lys-79' methylation. Post-translationally, phosphorylated on SPKK motifs 2 and 3; which may regulate DNA binding. Dephosphorylated during maturation of spermatids to mature sperm and rephosphorylated at fertilization. In terms of processing, glcNAcylation at Ser-127 promotes monoubiquitination of Lys-135. It fluctuates in response to extracellular glucose, and associates with transcribed genes.

Its subcellular location is the nucleus. It is found in the chromosome. Its function is as follows. Core component of nucleosome. Nucleosomes wrap and compact DNA into chromatin, limiting DNA accessibility to the cellular machineries which require DNA as a template. Histones thereby play a central role in transcription regulation, DNA repair, DNA replication and chromosomal stability. DNA accessibility is regulated via a complex set of post-translational modifications of histones, also called histone code, and nucleosome remodeling. This Strongylocentrotus purpuratus (Purple sea urchin) protein is Histone H2B.1, sperm.